The chain runs to 208 residues: Uracil phosphoribosyltransferase (208 aa).

5-phospho-alpha-D-ribose 1-diphosphate-binding positions include Arg78, Arg103, and 130 to 138 (DPMLATGGT). Residues Ile193 and 198–200 (GDA) each bind uracil. A 5-phospho-alpha-D-ribose 1-diphosphate-binding site is contributed by Asp199.

This sequence belongs to the UPRTase family. Mg(2+) serves as cofactor.

The enzyme catalyses UMP + diphosphate = 5-phospho-alpha-D-ribose 1-diphosphate + uracil. It functions in the pathway pyrimidine metabolism; UMP biosynthesis via salvage pathway; UMP from uracil: step 1/1. Its activity is regulated as follows. Allosterically activated by GTP. Catalyzes the conversion of uracil and 5-phospho-alpha-D-ribose 1-diphosphate (PRPP) to UMP and diphosphate. This Desulfotalea psychrophila (strain LSv54 / DSM 12343) protein is Uracil phosphoribosyltransferase.